The chain runs to 229 residues: Urease accessory protein UreF (229 aa).

The protein belongs to the UreF family. In terms of assembly, ureD, UreF and UreG form a complex that acts as a GTP-hydrolysis-dependent molecular chaperone, activating the urease apoprotein by helping to assemble the nickel containing metallocenter of UreC. The UreE protein probably delivers the nickel.

The protein localises to the cytoplasm. Required for maturation of urease via the functional incorporation of the urease nickel metallocenter. The polypeptide is Urease accessory protein UreF (Staphylococcus aureus (strain USA300)).